Here is a 375-residue protein sequence, read N- to C-terminus: DNA replication and repair protein RecF (375 aa).

ATP is bound at residue 30-37 (GENAQGKT).

Belongs to the RecF family.

The protein localises to the cytoplasm. Its function is as follows. The RecF protein is involved in DNA metabolism; it is required for DNA replication and normal SOS inducibility. RecF binds preferentially to single-stranded, linear DNA. It also seems to bind ATP. The polypeptide is DNA replication and repair protein RecF (Bacillus anthracis (strain A0248)).